Consider the following 401-residue polypeptide: Argininosuccinate synthase (401 aa).

Residues 7–15 (AYSGGLDTS) and Ala-34 each bind ATP. Residues Tyr-85 and Ser-90 each coordinate L-citrulline. Gly-115 lines the ATP pocket. Positions 117, 121, and 122 each coordinate L-aspartate. Asn-121 serves as a coordination point for L-citrulline. Residues Arg-125, Ser-174, Ser-183, Glu-259, and Tyr-271 each contribute to the L-citrulline site.

This sequence belongs to the argininosuccinate synthase family. Type 1 subfamily. As to quaternary structure, homotetramer.

It localises to the cytoplasm. The enzyme catalyses L-citrulline + L-aspartate + ATP = 2-(N(omega)-L-arginino)succinate + AMP + diphosphate + H(+). It functions in the pathway amino-acid biosynthesis; L-arginine biosynthesis; L-arginine from L-ornithine and carbamoyl phosphate: step 2/3. The sequence is that of Argininosuccinate synthase from Desulforamulus reducens (strain ATCC BAA-1160 / DSM 100696 / MI-1) (Desulfotomaculum reducens).